Consider the following 72-residue polypeptide: Heat-stable enterotoxin ST-IA/ST-P (72 aa).

The first 19 residues, 1–19 (MKKLMLAIFISVLSFPSFS), serve as a signal peptide directing secretion. A propeptide spanning residues 20–54 (QSTESLDSSKEKITLETKKCDVVKNNSEKKSENMN) is cleaved from the precursor. 3 disulfide bridges follow: C59–C64, C60–C68, and C63–C71.

Belongs to the heat-stable enterotoxin family.

It localises to the secreted. Its function is as follows. Toxin which activates the particulate form of guanylate cyclase and increases cyclic GMP levels within the host intestinal epithelial cells. This is Heat-stable enterotoxin ST-IA/ST-P (sta1) from Escherichia coli.